Here is a 369-residue protein sequence, read N- to C-terminus: Chorismate synthase (369 aa).

The NADP(+) site is built by arginine 48 and arginine 54. Residues 125–127, 238–239, glycine 278, 293–297, and arginine 319 contribute to the FMN site; these read RSS, NA, and KPTSS.

The protein belongs to the chorismate synthase family. Homotetramer. Requires FMNH2 as cofactor.

It catalyses the reaction 5-O-(1-carboxyvinyl)-3-phosphoshikimate = chorismate + phosphate. The protein operates within metabolic intermediate biosynthesis; chorismate biosynthesis; chorismate from D-erythrose 4-phosphate and phosphoenolpyruvate: step 7/7. Its function is as follows. Catalyzes the anti-1,4-elimination of the C-3 phosphate and the C-6 proR hydrogen from 5-enolpyruvylshikimate-3-phosphate (EPSP) to yield chorismate, which is the branch point compound that serves as the starting substrate for the three terminal pathways of aromatic amino acid biosynthesis. This reaction introduces a second double bond into the aromatic ring system. The sequence is that of Chorismate synthase from Nitrosococcus oceani (strain ATCC 19707 / BCRC 17464 / JCM 30415 / NCIMB 11848 / C-107).